The sequence spans 283 residues: Phosphate import ATP-binding protein PstB (283 aa).

A compositionally biased stretch (polar residues) spans 1 to 20; the sequence is MAQTLAQTKQISQSHTFDVS. A disordered region spans residues 1 to 32; the sequence is MAQTLAQTKQISQSHTFDVSQSHHKTPDDTNS. The ABC transporter domain maps to 37–278; it reads YSTQNLDLWY…PSNKKTEDYI (242 aa). 69–76 contributes to the ATP binding site; sequence GPSGCGKS.

Belongs to the ABC transporter superfamily. Phosphate importer (TC 3.A.1.7) family. The complex is composed of two ATP-binding proteins (PstB), two transmembrane proteins (PstC and PstA) and a solute-binding protein (PstS).

It localises to the cell membrane. It catalyses the reaction phosphate(out) + ATP + H2O = ADP + 2 phosphate(in) + H(+). Part of the ABC transporter complex PstSACB involved in phosphate import. Responsible for energy coupling to the transport system. In Staphylococcus aureus (strain MRSA252), this protein is Phosphate import ATP-binding protein PstB.